A 33-amino-acid polypeptide reads, in one-letter code: Cecropin-B (33 aa).

K21 carries the 5-hydroxylysine modification.

Monomer. In terms of tissue distribution, hemolymph.

It localises to the secreted. Its function is as follows. Cecropins have lytic and antibacterial activity against several Gram-positive and Gram-negative bacteria. Also has activity against fungi. This is Cecropin-B from Heliothis virescens (Tobacco budworm moth).